The primary structure comprises 88 residues: Small ribosomal subunit protein bS16 (88 aa).

Belongs to the bacterial ribosomal protein bS16 family.

The protein is Small ribosomal subunit protein bS16 of Anaeromyxobacter sp. (strain Fw109-5).